The primary structure comprises 372 residues: GTPase Obg (372 aa).

Residues Met-1–Met-159 form the Obg domain. Positions Gly-121–Ala-141 are disordered. The OBG-type G domain occupies Ala-160–Asp-329. GTP is bound by residues Gly-166–Ser-173, Phe-191–Glu-195, Asp-213–Gly-216, Asn-280–Asp-283, and Ser-310–Ile-312. Ser-173 and Thr-193 together coordinate Mg(2+). The tract at residues Gln-346–Glu-372 is disordered.

The protein belongs to the TRAFAC class OBG-HflX-like GTPase superfamily. OBG GTPase family. In terms of assembly, monomer. Requires Mg(2+) as cofactor.

It is found in the cytoplasm. Functionally, an essential GTPase which binds GTP, GDP and possibly (p)ppGpp with moderate affinity, with high nucleotide exchange rates and a fairly low GTP hydrolysis rate. Plays a role in control of the cell cycle, stress response, ribosome biogenesis and in those bacteria that undergo differentiation, in morphogenesis control. In Desulfotalea psychrophila (strain LSv54 / DSM 12343), this protein is GTPase Obg.